We begin with the raw amino-acid sequence, 425 residues long: Serine--tRNA ligase (425 aa).

An L-serine-binding site is contributed by 228 to 230 (TAE). 259-261 (RSE) lines the ATP pocket. Glutamate 282 is an L-serine binding site. Residue 346–349 (EIAS) coordinates ATP. L-serine is bound at residue serine 382.

Belongs to the class-II aminoacyl-tRNA synthetase family. Type-1 seryl-tRNA synthetase subfamily. Homodimer. The tRNA molecule binds across the dimer.

It localises to the cytoplasm. The enzyme catalyses tRNA(Ser) + L-serine + ATP = L-seryl-tRNA(Ser) + AMP + diphosphate + H(+). The catalysed reaction is tRNA(Sec) + L-serine + ATP = L-seryl-tRNA(Sec) + AMP + diphosphate + H(+). The protein operates within aminoacyl-tRNA biosynthesis; selenocysteinyl-tRNA(Sec) biosynthesis; L-seryl-tRNA(Sec) from L-serine and tRNA(Sec): step 1/1. Functionally, catalyzes the attachment of serine to tRNA(Ser). Is also able to aminoacylate tRNA(Sec) with serine, to form the misacylated tRNA L-seryl-tRNA(Sec), which will be further converted into selenocysteinyl-tRNA(Sec). The protein is Serine--tRNA ligase of Rickettsia rickettsii (strain Iowa).